Here is a 68-residue protein sequence, read N- to C-terminus: Conotoxin Cal12.1p3 (68 aa).

Positions 1–21 are excised as a propeptide; sequence DLITNSYTRGKPRHVTSWPKL.

In terms of processing, contains 4 disulfide bonds. In terms of tissue distribution, expressed by the venom duct.

The protein resides in the secreted. The polypeptide is Conotoxin Cal12.1p3 (Californiconus californicus (California cone)).